We begin with the raw amino-acid sequence, 312 residues long: L-type lectin-like domain-containing protein C126.08c (312 aa).

The N-terminal stretch at 1-22 is a signal peptide; sequence MFFSVKNVFLLGIFGFVLGALA. The Extracellular portion of the chain corresponds to 23 to 280; the sequence is ETSHLERLSL…QKKGSFKKRL (258 aa). The L-type lectin-like domain maps to 24–248; sequence TSHLERLSLE…EIASILSRTI (225 aa). Residues 281-301 traverse the membrane as a helical segment; the sequence is IILLLSLIVIFSIFALRSYQV. The Cytoplasmic segment spans residues 302–312; that stretch reads QQEKNRRTTVL.

The protein localises to the membrane. The protein resides in the endoplasmic reticulum. Its subcellular location is the golgi apparatus. It localises to the vacuole. The chain is L-type lectin-like domain-containing protein C126.08c from Schizosaccharomyces pombe (strain 972 / ATCC 24843) (Fission yeast).